Consider the following 149-residue polypeptide: Large ribosomal subunit protein bL9 (149 aa).

This sequence belongs to the bacterial ribosomal protein bL9 family.

Binds to the 23S rRNA. The chain is Large ribosomal subunit protein bL9 from Fervidobacterium nodosum (strain ATCC 35602 / DSM 5306 / Rt17-B1).